Here is a 431-residue protein sequence, read N- to C-terminus: Fumarylacetoacetase fahA (431 aa).

Asp-133 serves as a coordination point for Ca(2+). Tyr-135 contributes to the substrate binding site. His-140 functions as the Proton acceptor in the catalytic mechanism. A substrate-binding site is contributed by Arg-149. 3 residues coordinate Ca(2+): Glu-209, Glu-211, and Asp-243. Residue Asp-243 coordinates Mg(2+). Residues Gln-250 and Tyr-254 each contribute to the substrate site. Residues Lys-263 and Thr-267 each coordinate Mg(2+). Thr-362 is a binding site for substrate. Polar residues predominate over residues 362–381 (TISGKENQTQGSLLEQTNGK). The tract at residues 362–382 (TISGKENQTQGSLLEQTNGKN) is disordered.

This sequence belongs to the FAH family. The cofactor is Ca(2+). It depends on Mg(2+) as a cofactor.

The enzyme catalyses 4-fumarylacetoacetate + H2O = acetoacetate + fumarate + H(+). It participates in amino-acid degradation; L-phenylalanine degradation; acetoacetate and fumarate from L-phenylalanine: step 6/6. Functionally, fumarylacetoacetase; part of the L-tyrosine degradation gene cluster that mediates the biosynthesis of the brownish pigment pyomelanin as an alternative melanin. The 4-hydroxyphenylpyruvate dioxygenase hppD catalyzes the conversion of 4-hydroxyphenylpyruvate to homogentisic acid (HGA). The protein hmgX is crucial for this conversion and thus, probably functions as an accessory factor to mediate specific activity of hppD. The homogentisate 1,2-dioxygenase hmgA is then involved in the cleavage of the aromatic ring of HGA and its conversion to 4-maleylacetoacetate. When hmgA activity is lowered by the cell wall integrity (CWI) signaling pathway, HGA accumulates and leads to the production of pyomelanin through benzoquinone acetic acid after oxidation and polymerization. On the opposite, in non-stress conditions, both hppD and hmgA activities are balanced and HGA is degraded into 4-maleylacetoacetate. 4-maleylacetoacetate is further converted to 4-fumarylacetoacetate by the maleylacetoacetate isomerase maiA, which is degraded into fumarate and acetoacetate by the fumarylacetoacetase fahA. This chain is Fumarylacetoacetase fahA, found in Aspergillus fumigatus (strain ATCC MYA-4609 / CBS 101355 / FGSC A1100 / Af293) (Neosartorya fumigata).